Reading from the N-terminus, the 132-residue chain is Acid shock protein (132 aa).

A signal peptide spans 1–21 (MKKVLALVVAAAMGLSSAAFA). The segment covering 20 to 45 (FAAETTTSSAAPATATATTTKAAPAK) has biased composition (low complexity). The tract at residues 20 to 132 (FAAETTTSSA…AAKPAAQPAA (113 aa)) is disordered. Residues 22–90 (AETTTSSAAP…TTAPVEQKAQ (69 aa)) constitute a propeptide that is removed on maturation. The span at 62-71 (AAKKHHKKAV) shows a compositional bias: basic residues. 2 stretches are compositionally biased toward low complexity: residues 76–90 (AAPA…QKAQ) and 100–109 (AKPAVAQKAQ). A compositionally biased stretch (basic residues) spans 110-119 (AAKKHHKKAV).

This sequence belongs to the Asr family. Proteolytic processing gives rise to the active protein.

The protein resides in the periplasm. Required for growth and/or survival at acidic conditions. This is Acid shock protein from Enterobacter sp. (strain 638).